The sequence spans 203 residues: E3 ubiquitin-protein ligase rnf152-B (203 aa).

An RING-type zinc finger spans residues 12–55 (CQICFNYYSPRRRPKLLDCKHTCCSVCLQQMRASQKDLRCPWCR). A helical membrane pass occupies residues 167-187 (SGVCTVILVACVLVFLLGIVL).

Belongs to the RNF152 family.

It localises to the lysosome membrane. The catalysed reaction is S-ubiquitinyl-[E2 ubiquitin-conjugating enzyme]-L-cysteine + [acceptor protein]-L-lysine = [E2 ubiquitin-conjugating enzyme]-L-cysteine + N(6)-ubiquitinyl-[acceptor protein]-L-lysine.. Its pathway is protein modification; protein ubiquitination. Its function is as follows. E3 ubiquitin-protein ligase that acts as a negative regulator of mTORC1 signaling by mediating ubiquitination of RagA/RRAGA and RHEB. Catalyzes 'Lys-63'-linked polyubiquitination of RagA/RRAGA in response to amino acid starvation, thereby regulating mTORC1 signaling. Also mediates monoubiquitination of RHEB, promoting its association with the TSC-TBC complex and subsequent inhibition. Also mediates 'Lys-48'-linked polyubiquitination of target proteins and their subsequent targeting to the proteasome for degradation. The chain is E3 ubiquitin-protein ligase rnf152-B from Xenopus laevis (African clawed frog).